Reading from the N-terminus, the 435-residue chain is Serine--tRNA ligase (435 aa).

T234–E236 is a binding site for L-serine. R265–E267 contacts ATP. E288 contacts L-serine. E352–S355 contacts ATP. S388 contacts L-serine.

It belongs to the class-II aminoacyl-tRNA synthetase family. Type-1 seryl-tRNA synthetase subfamily. As to quaternary structure, homodimer. The tRNA molecule binds across the dimer.

The protein localises to the cytoplasm. It catalyses the reaction tRNA(Ser) + L-serine + ATP = L-seryl-tRNA(Ser) + AMP + diphosphate + H(+). The catalysed reaction is tRNA(Sec) + L-serine + ATP = L-seryl-tRNA(Sec) + AMP + diphosphate + H(+). Its pathway is aminoacyl-tRNA biosynthesis; selenocysteinyl-tRNA(Sec) biosynthesis; L-seryl-tRNA(Sec) from L-serine and tRNA(Sec): step 1/1. Functionally, catalyzes the attachment of serine to tRNA(Ser). Is also able to aminoacylate tRNA(Sec) with serine, to form the misacylated tRNA L-seryl-tRNA(Sec), which will be further converted into selenocysteinyl-tRNA(Sec). The sequence is that of Serine--tRNA ligase from Synechococcus sp. (strain JA-3-3Ab) (Cyanobacteria bacterium Yellowstone A-Prime).